We begin with the raw amino-acid sequence, 282 residues long: N-methyltransferase gliN (282 aa).

The protein belongs to the methyltransferase superfamily. LaeA methyltransferase family.

The protein operates within mycotoxin biosynthesis. Its function is as follows. N-methyltransferase; part of the gene cluster that mediates the biosynthesis of gliotoxin, a member of the epipolythiodioxopiperazine (ETP) class of toxins characterized by a disulfide bridged cyclic dipeptide. The first step in gliotoxin biosynthesis is the condensation of serine and phenylalanine to form the cyclo-L-phenylalanyl-L-serine diketopiperazine (DKP) by the NRPS gliP. GliP is also able to produce the DKP cyclo-L-tryptophanyl-L-serine, suggesting that the substrate specificity of the first adenylation (A) domain in gliP is sufficiently relaxed to accommodate both L-Phe and L-Trp. The cytochrome P450 monooxygenase gliC has been shown to catalyze the subsequent hydroxylation of the alpha-carbon of L-Phe in cyclo-L-phenylalanyl-L-serine whereas the second cytochrome P450 enzyme, gliF, is presumably involved in the modification of the DKP side chain. The glutathione S-transferase (GST) gliG then forms a bis-glutathionylated biosynthetic intermediate which is responsible for the sulfurization of gliotoxin. This bis-glutathionylated intermediate is subsequently processed by the gamma-glutamyl cyclotransferase gliK to remove both gamma-glutamyl moieties. Subsequent processing via gliI yields a biosynthetic intermediate, which is N-methylated via the N-methyltransferase gliN, before the gliotoxin oxidoreductase gliT-mediated disulfide bridge closure. GliN-mediated amide methylation confers stability to ETP, damping the spontaneous formation of tri- and tetrasulfides. Intracellular dithiol gliotoxin oxidized by gliT is subsequently effluxed by gliA. Gliotoxin contributes to pathogenesis during invasive aspergillosis. In macrophages and neutrophils, gliotoxin showed inhibition of various different cell functions including cytokine production, antigen presentation, phagocytosis, and production of reactive oxygen species. The chain is N-methyltransferase gliN from Aspergillus fumigatus (strain ATCC MYA-4609 / CBS 101355 / FGSC A1100 / Af293) (Neosartorya fumigata).